We begin with the raw amino-acid sequence, 341 residues long: Trace amine-associated receptor 13c (341 aa).

At 1–34 the chain is on the extracellular side; the sequence is MDLSSQEYDPSQFCFPAVNNSCLKGTHHVSTQTV. The N-linked (GlcNAc...) asparagine glycan is linked to asparagine 19. Cystine bridges form between cysteine 22–cysteine 186 and cysteine 105–cysteine 186. Residues 35–55 traverse the membrane as a helical segment; sequence VYLILASAMTVTVLGNSVVII. Topologically, residues 56–68 are cytoplasmic; the sequence is SIAHFKQLQTPTN. Residues 69–89 traverse the membrane as a helical segment; sequence ILVMSLALADLLLGLVVMPFS. Topologically, residues 90–105 are extracellular; the sequence is MIRSVDGCWYYGETFC. Residues 106–126 traverse the membrane as a helical segment; that stretch reads LLHTGFDLFLTSVSIFHLIFI. The Cytoplasmic segment spans residues 127 to 147; it reads AVDRHQAVCFPLQYPTRITIP. The chain crosses the membrane as a helical span at residues 148–168; the sequence is VAWVMVMISWSMAAFYSYGVV. The Extracellular segment spans residues 169–195; it reads YSKANLEGLEEYIASVYCMGGCTLYFN. Residues 196–219 form a helical membrane-spanning segment; sequence ALWSVLDTLLTFFLPCSVMVGLYA. The Cytoplasmic segment spans residues 220-257; the sequence is RIFVVAKKHIKSITEANQNENENVFKNPRRSERKAAKT. The helical transmembrane segment at 258–278 threads the bilayer; sequence LGIVVGAFILCWLPFFINSLV. The Extracellular segment spans residues 279 to 292; that stretch reads DPYINFSTPYALFD. A glycan (N-linked (GlcNAc...) asparagine) is linked at asparagine 283. A helical membrane pass occupies residues 293–313; that stretch reads AFGWLGYTNSTLNPIIYGLFY. Residues 314 to 341 are Cytoplasmic-facing; sequence PWFRKTLSLIVTLRIFEPNSSDINLFTV.

It belongs to the G-protein coupled receptor 1 family. In terms of tissue distribution, expressed in olfactory epithelium (at protein level). Detected in a sparse population of olfactory sensory neurons.

It localises to the cell membrane. Its function is as follows. Olfactory receptor for medium length odd-chained diamines including cadaverine which is generated by bacterial decarboxylation of the basic amino acid lysine and contributes to the odor of decomposing tissue. Mediates pronounced innate aversion behavior to cadaverine. In Danio rerio (Zebrafish), this protein is Trace amine-associated receptor 13c.